Reading from the N-terminus, the 273-residue chain is Undecaprenyl-diphosphatase (273 aa).

7 helical membrane-spanning segments follow: residues 4 to 24 (LILLKALLLGIVEGLTEFLPI), 43 to 63 (KAKVFTVAIQLGAILAVCWEY), 82 to 102 (FVINLFIAFLPAAILGLLFIK), 108 to 128 (LFHPMPVAIALVTGGILILWA), 183 to 203 (AAEFSFFLAIPVMFAATFYDV), 217 to 237 (MFATGSVAAFISALIAIRGFI), and 248 to 268 (FAWYRIGFGLIVLLTAYSGLV).

Belongs to the UppP family.

The protein resides in the cell inner membrane. It carries out the reaction di-trans,octa-cis-undecaprenyl diphosphate + H2O = di-trans,octa-cis-undecaprenyl phosphate + phosphate + H(+). Catalyzes the dephosphorylation of undecaprenyl diphosphate (UPP). Confers resistance to bacitracin. This is Undecaprenyl-diphosphatase from Nitrosomonas europaea (strain ATCC 19718 / CIP 103999 / KCTC 2705 / NBRC 14298).